The chain runs to 2598 residues: Partially reducing polyketide synthase men1 (2598 aa).

A Ketosynthase family 3 (KS3) domain is found at 7–435 (SQSIAIVGLS…GSNAHAILDD (429 aa)). Residues C181, H316, and H358 each act as for beta-ketoacyl synthase activity in the active site. A compositionally biased stretch (basic residues) spans 450–459 (GKSHHHHHQH). 2 disordered regions span residues 450 to 490 (GKSH…NGTT) and 537 to 557 (AEKQ…DPEK). Positions 474–490 (VNGTSEVNGTSGVNGTT) are enriched in low complexity. The Malonyl-CoA:ACP transacylase (MAT) domain maps to 611–915 (YVFTGQGAQW…RGPVTQILQS (305 aa)). Positions 1008 to 1151 (LGLIGAPMPN…GSVAVEFGAL (144 aa)) are N-terminal hotdog fold. Residues 1008–1325 (LGLIGAPMPN…CVEMPSASGM (318 aa)) enclose the PKS/mFAS DH domain. Positions 1009–1323 (GLIGAPMPNF…LVCVEMPSAS (315 aa)) are dehydratase (DH) domain. The interval 1169 to 1325 (TISQEVDVFY…CVEMPSASGM (157 aa)) is C-terminal hotdog fold. The region spanning 1886 to 2197 (GMLNTLCFEI…ARSRQDKIVI (312 aa)) is the Enoyl reductase (ER) domain. The Ketoreductase (KR) domain occupies 2222-2399 (TYLIAGGLGG…AATIDLGIVK (178 aa)). The 78-residue stretch at 2510-2587 (EAARLVSAAV…AFASDLAKKG (78 aa)) folds into the Carrier domain. S2547 is modified (O-(pantetheine 4'-phosphoryl)serine).

The cofactor is pantetheine 4'-phosphate.

It participates in secondary metabolite biosynthesis. In terms of biological role, partially reducing polyketide synthase; part of the gene cluster that mediates the biosynthesis of menisporopsin A, a bioactive macrocyclic polylactone. The biosynthesis of menisporopsin A is performed by a reducing (man1) and a non-reducing (men2) polyketide synthase that catalyze the formation of each menisporopsin A subunits, while the esterification and cyclolactonization activities are probably peformed by the unusual thioesterase domain of men2. First, a reduced diketide intermediate, 3-hydroxybutyryl-S-ACP is produced by men1 and transferred to men2; this is followed by a second reduced diketide which is further elongated using 3 units of malonyl-coA to form a reduced pentaketide. The cyclization of this intermediate by the PT domain forms the second subunit, 2,4-dihydroxy-6-(2-hydroxy-n-propyl)benzoyl-S-ACP. The TE domain of men2 then esterifies the secondary hydroxyl group on the side chain of the second subunit with the acyl-TE of the first subunit to form the first ester intermediate. This process occurs iteratively to form a linear tetraester intermediate. The final subunit is formed by a similar process, except that an extra malonyl-CoA is required in an additional elongation step to form a reduced hexaketide intermediate, and the carbonyl group next to the secondary hydroxyl group is reduced by a trans-acting ketoreductase. Again, the PT domain catalyzes cyclization to form the largest subunit, 2,4-dihydroxy-6-(2,4-dihydroxy-n-pentyl) benzoyl-S-ACP. Then the linear pentaester intermediate is formed. In this step, if the intermediate transfer rate is slow, intra- molecular cyclization involving the secondary hydroxyl group of the pentaester intermediate may occur to form menisporopsin B. Alternatively, transfer of the pentaester intermediate to the TE domain would allow cyclolactonization to be catalyzed by the TE to form menisporopsin A. This chain is Partially reducing polyketide synthase men1, found in Menisporopsis theobromae.